A 445-amino-acid polypeptide reads, in one-letter code: Adenylosuccinate synthetase (445 aa).

GTP contacts are provided by residues 24–30 (GDEGKGK) and 52–54 (GHT). D25 acts as the Proton acceptor in catalysis. 2 residues coordinate Mg(2+): D25 and G52. IMP-binding positions include 25–28 (DEGK), 50–53 (NAGH), T147, R161, N238, T253, and R317. Catalysis depends on H53, which acts as the Proton donor. Substrate is bound at residue 313–319 (TTTGRRR). GTP-binding positions include R319, 345–347 (KLD), and 427–429 (GVG).

This sequence belongs to the adenylosuccinate synthetase family. Homodimer. It depends on Mg(2+) as a cofactor.

It localises to the cytoplasm. It catalyses the reaction IMP + L-aspartate + GTP = N(6)-(1,2-dicarboxyethyl)-AMP + GDP + phosphate + 2 H(+). Its pathway is purine metabolism; AMP biosynthesis via de novo pathway; AMP from IMP: step 1/2. In terms of biological role, plays an important role in the de novo pathway and in the salvage pathway of purine nucleotide biosynthesis. Catalyzes the first committed step in the biosynthesis of AMP from IMP. This is Adenylosuccinate synthetase from Malassezia globosa (strain ATCC MYA-4612 / CBS 7966) (Dandruff-associated fungus).